The sequence spans 102 residues: Large ribosomal subunit protein bL21 (102 aa).

It belongs to the bacterial ribosomal protein bL21 family. As to quaternary structure, part of the 50S ribosomal subunit. Contacts protein L20.

This protein binds to 23S rRNA in the presence of protein L20. The polypeptide is Large ribosomal subunit protein bL21 (Onion yellows phytoplasma (strain OY-M)).